The sequence spans 278 residues: Protein canopy homolog 3 (278 aa).

The signal sequence occupies residues 1-30 (MDSMPEPASRCLLLLPLLLLLLLLLPAPEL). The Saposin B-type domain maps to 47–271 (SKCEVCKYVA…EGIQKASPLT (225 aa)). Disulfide bonds link cysteine 49–cysteine 206, cysteine 52–cysteine 194, and cysteine 104–cysteine 166. An N-linked (GlcNAc...) asparagine glycan is attached at asparagine 153. The stretch at 153 to 179 (NETSAEVADLKKQCDVLVEEFEEVIED) forms a coiled coil. A disordered region spans residues 215–278 (KGDTAALGGK…PLTHSPPDEL (64 aa)). A compositionally biased stretch (low complexity) spans 233–243 (AKAAGGRSSSS).

It belongs to the canopy family. As to quaternary structure, interacts with HSP90B1; this interaction is disrupted in the presence of ATP. Interacts with TLR1, TLR2, TLR4 and TLR9. Strongest interaction with TLR4.

It is found in the endoplasmic reticulum. Toll-like receptor (TLR)-specific co-chaperone for HSP90B1. Required for proper TLR folding, except that of TLR3, and hence controls TLR exit from the endoplasmic reticulum. Consequently, required for both innate and adaptive immune responses. The sequence is that of Protein canopy homolog 3 (CNPY3) from Homo sapiens (Human).